The primary structure comprises 302 residues: Nitrophorin Cim l NP (302 aa).

The N-terminal stretch at 1–20 (MKLLLSAGAALAFVLGLCAA) is a signal peptide. Cys80 provides a ligand contact to heme.

It depends on heme b as a cofactor. In terms of processing, the N-terminus is blocked. In terms of tissue distribution, expressed in salivary glands.

The protein localises to the secreted. Heme-based protein that delivers nitric oxide gas (NO) to the victim while feeding, resulting in vasodilation. In place of heme, the heme-binding cysteine can also reversibly bind NO when it is present in high concentrations. This chain is Nitrophorin Cim l NP, found in Cimex lectularius (Bed bug).